The sequence spans 277 residues: Shikimate dehydrogenase (NADP(+)) (277 aa).

Shikimate-binding positions include 18-20 and Thr65; that span reads SKS. Lys69 acts as the Proton acceptor in catalysis. Glu81 contributes to the NADP(+) binding site. Shikimate contacts are provided by Asn90 and Asp106. NADP(+) is bound by residues 130–134, 154–159, and Met217; these read GAGGA and NRTFSK. Residue Tyr219 participates in shikimate binding. NADP(+) is bound at residue Gly241.

Belongs to the shikimate dehydrogenase family. In terms of assembly, homodimer.

The enzyme catalyses shikimate + NADP(+) = 3-dehydroshikimate + NADPH + H(+). It participates in metabolic intermediate biosynthesis; chorismate biosynthesis; chorismate from D-erythrose 4-phosphate and phosphoenolpyruvate: step 4/7. Involved in the biosynthesis of the chorismate, which leads to the biosynthesis of aromatic amino acids. Catalyzes the reversible NADPH linked reduction of 3-dehydroshikimate (DHSA) to yield shikimate (SA). This Vibrio campbellii (strain ATCC BAA-1116) protein is Shikimate dehydrogenase (NADP(+)).